Reading from the N-terminus, the 306-residue chain is NAD kinase 1 (306 aa).

Catalysis depends on D67, which acts as the Proton acceptor. NAD(+) contacts are provided by residues 67–68, 149–150, and D181; these read DG and ND.

The protein belongs to the NAD kinase family. It depends on a divalent metal cation as a cofactor.

Its subcellular location is the cytoplasm. It carries out the reaction NAD(+) + ATP = ADP + NADP(+) + H(+). Functionally, involved in the regulation of the intracellular balance of NAD and NADP, and is a key enzyme in the biosynthesis of NADP. Catalyzes specifically the phosphorylation on 2'-hydroxyl of the adenosine moiety of NAD to yield NADP. This chain is NAD kinase 1, found in Synechococcus sp. (strain ATCC 27144 / PCC 6301 / SAUG 1402/1) (Anacystis nidulans).